The sequence spans 179 residues: Crossover junction endodeoxyribonuclease RuvC (179 aa).

Active-site residues include Asp-7, Glu-67, and Asp-139. Residues Asp-7, Glu-67, and Asp-139 each coordinate Mg(2+).

It belongs to the RuvC family. Homodimer which binds Holliday junction (HJ) DNA. The HJ becomes 2-fold symmetrical on binding to RuvC with unstacked arms; it has a different conformation from HJ DNA in complex with RuvA. In the full resolvosome a probable DNA-RuvA(4)-RuvB(12)-RuvC(2) complex forms which resolves the HJ. The cofactor is Mg(2+).

It localises to the cytoplasm. The enzyme catalyses Endonucleolytic cleavage at a junction such as a reciprocal single-stranded crossover between two homologous DNA duplexes (Holliday junction).. Functionally, the RuvA-RuvB-RuvC complex processes Holliday junction (HJ) DNA during genetic recombination and DNA repair. Endonuclease that resolves HJ intermediates. Cleaves cruciform DNA by making single-stranded nicks across the HJ at symmetrical positions within the homologous arms, yielding a 5'-phosphate and a 3'-hydroxyl group; requires a central core of homology in the junction. The consensus cleavage sequence is 5'-(A/T)TT(C/G)-3'. Cleavage occurs on the 3'-side of the TT dinucleotide at the point of strand exchange. HJ branch migration catalyzed by RuvA-RuvB allows RuvC to scan DNA until it finds its consensus sequence, where it cleaves and resolves the cruciform DNA. This Sorangium cellulosum (strain So ce56) (Polyangium cellulosum (strain So ce56)) protein is Crossover junction endodeoxyribonuclease RuvC.